We begin with the raw amino-acid sequence, 470 residues long: Serine carboxypeptidase ctsa-4.1 (470 aa).

The signal sequence occupies residues 1-19 (MKLLSILFIFVSSYSFCLA). A glycan (N-linked (GlcNAc...) asparagine) is linked at asparagine 132. Serine 169 is a catalytic residue. A glycan (N-linked (GlcNAc...) asparagine) is linked at asparagine 316. Aspartate 380 is an active-site residue. Asparagine 396 carries N-linked (GlcNAc...) asparagine glycosylation. Histidine 441 is a catalytic residue.

It belongs to the peptidase S10 family.

It catalyses the reaction Release of a C-terminal amino acid with broad specificity.. The polypeptide is Serine carboxypeptidase ctsa-4.1 (Caenorhabditis elegans).